The primary structure comprises 296 residues: Phosphatidylglycerol--prolipoprotein diacylglyceryl transferase (296 aa).

Helical transmembrane passes span 17-37, 59-79, 97-117, 129-149, 204-224, 230-250, and 257-277; these read LAVR…IVVG, MMFY…VLFY, GGMS…LFAW, FVAP…FING, SQLY…FLFA, MGAI…TVEF, and FLGL…PMIL. Arginine 142 is an a 1,2-diacyl-sn-glycero-3-phospho-(1'-sn-glycerol) binding site.

It belongs to the Lgt family.

The protein localises to the cell inner membrane. The enzyme catalyses L-cysteinyl-[prolipoprotein] + a 1,2-diacyl-sn-glycero-3-phospho-(1'-sn-glycerol) = an S-1,2-diacyl-sn-glyceryl-L-cysteinyl-[prolipoprotein] + sn-glycerol 1-phosphate + H(+). It functions in the pathway protein modification; lipoprotein biosynthesis (diacylglyceryl transfer). In terms of biological role, catalyzes the transfer of the diacylglyceryl group from phosphatidylglycerol to the sulfhydryl group of the N-terminal cysteine of a prolipoprotein, the first step in the formation of mature lipoproteins. This is Phosphatidylglycerol--prolipoprotein diacylglyceryl transferase from Burkholderia cenocepacia (strain HI2424).